The chain runs to 308 residues: Glutamyl-Q tRNA(Asp) synthetase (308 aa).

L-glutamate-binding positions include 19-23 (RFAPS) and E55. Positions 22–32 (PSPSGELHFGS) match the 'HIGH' region motif. Positions 111, 113, 125, and 129 each coordinate Zn(2+). Residues Y182 and R200 each coordinate L-glutamate. Positions 238 to 242 (KLSKQ) match the 'KMSKS' region motif. ATP is bound at residue K241.

The protein belongs to the class-I aminoacyl-tRNA synthetase family. GluQ subfamily. Requires Zn(2+) as cofactor.

Catalyzes the tRNA-independent activation of glutamate in presence of ATP and the subsequent transfer of glutamate onto a tRNA(Asp). Glutamate is transferred on the 2-amino-5-(4,5-dihydroxy-2-cyclopenten-1-yl) moiety of the queuosine in the wobble position of the QUC anticodon. The sequence is that of Glutamyl-Q tRNA(Asp) synthetase from Escherichia coli O157:H7.